The chain runs to 355 residues: Protein RecA (355 aa).

ATP is bound at residue 65–72; that stretch reads GPESSGKT.

It belongs to the RecA family.

It is found in the cytoplasm. In terms of biological role, can catalyze the hydrolysis of ATP in the presence of single-stranded DNA, the ATP-dependent uptake of single-stranded DNA by duplex DNA, and the ATP-dependent hybridization of homologous single-stranded DNAs. It interacts with LexA causing its activation and leading to its autocatalytic cleavage. The polypeptide is Protein RecA (Pseudomonas entomophila (strain L48)).